The chain runs to 676 residues: Envelope glycoprotein (676 aa).

The signal sequence occupies residues Met-1 to Ser-32. At Ile-33–Gln-650 the chain is on the extracellular side. Asn-40 is a glycosylation site (N-linked (GlcNAc...) asparagine; by host). Cystine bridges form between Cys-53–Cys-609, Cys-108–Cys-135, Cys-121–Cys-147, Cys-511–Cys-556, and Cys-601–Cys-608. The interval Arg-54–Glu-201 is receptor-binding. 11 N-linked (GlcNAc...) asparagine; by host glycosylation sites follow: Asn-204, Asn-228, Asn-238, Asn-257, Asn-268, Asn-296, Asn-317, Asn-333, Asn-346, Asn-386, and Asn-413. Residues Glu-305–Thr-485 form a mucin-like region region. Positions Arg-314–Thr-335 are enriched in polar residues. Residues Arg-314–Glu-337 form a disordered region. A disordered region spans residues Thr-370 to Lys-478. Over residues Asp-414–Ala-427 the composition is skewed to low complexity. Asn-436, Asn-454, and Asn-462 each carry an N-linked (GlcNAc...) asparagine; by host glycan. Positions Ala-447–Thr-464 are enriched in polar residues. Residues Gly-524 to Ala-539 are fusion peptide. Residues Leu-554–Gln-595 adopt a coiled-coil conformation. A glycan (N-linked (GlcNAc...) asparagine; by host) is linked at Asn-563. The stretch at Trp-615–Thr-634 forms a coiled coil. The N-linked (GlcNAc...) asparagine; by host glycan is linked to Asn-618. The chain crosses the membrane as a helical span at residues Trp-651 to Ile-671. 2 S-palmitoyl cysteine; by host lipidation sites follow: Cys-670 and Cys-672. Residues Cys-672–Phe-676 are Cytoplasmic-facing.

This sequence belongs to the filoviruses glycoprotein family. As to quaternary structure, homotrimer; each monomer consists of a GP1 and a GP2 subunit linked by disulfide bonds. The resulting peplomers (GP1,2) protrude from the virus surface as spikes. Interacts with host integrin alpha-V/ITGAV. Interacts with host CLEC10A. Binds also to host CD209 and CLEC4M/DC-SIGN(R). Interacts with host FOLR1. Interacts with BST2; this interaction inhibits the antiviral effect of BST2 and this allows viral release from infected cells. Interacts with host FCN1; this interaction enhances viral entry. Interacts with host TLR4; this interaction induces cell death in T-lymphocytes or proinflammatory cytokines and SOCS1 production in monocytes. In terms of assembly, interacts with host entry receptor NPC1. GP1 and GP2delta are part of GP1,2delta soluble complexes released by ectodomain shedding. Post-translationally, the signal peptide region modulates GP's high mannose glycosylation, thereby determining the efficiency of the interactions with DC-SIGN(R). N-glycosylated. In terms of processing, O-glycosylated in the mucin-like region. Post-translationally, palmitoylation of GP2 is not required for its function. Specific enzymatic cleavages in vivo yield mature proteins. The precursor is processed into GP1 and GP2 by host cell furin in the trans Golgi, and maybe by other host proteases, to yield the mature GP1 and GP2 proteins. The cleavage site corresponds to the furin optimal cleavage sequence [KR]-X-[KR]-R. This cleavage does not seem to be required for function. After the internalization of the virus into cell endosomes, GP1 C-terminus is removed by the endosomal proteases cathepsin B, cathepsin L, or both, leaving a 19-kDa N-terminal fragment which is further digested by cathepsin B. Proteolytic processing of GP1,2 by host ADAM17 can remove the transmembrane anchor of GP2 and leads to shedding of complexes consisting in GP1 and truncated GP2 (GP1,2delta).

It localises to the virion membrane. Its subcellular location is the host cell membrane. The protein localises to the secreted. Its function is as follows. Trimeric GP1,2 complexes form the virion surface spikes and mediate the viral entry processes, with GP1 acting as the receptor-binding subunit and GP2 as the membrane fusion subunit. At later times of infection, down-regulates the expression of various host cell surface molecules that are essential for immune surveillance and cell adhesion. Down-modulates several integrins including ITGA1, ITGA2, ITGA3, ITGA4, ITGA5, ITGA6, ITGAV and ITGB1. This decrease in cell adhesion molecules may lead to cell detachment, contributing to the disruption of blood vessel integrity and hemorrhages developed during infection (cytotoxicity). Interacts with host TLR4 and thereby stimulates the differentiation and activation of monocytes leading to bystander death of T-lymphocytes. Down-regulates as well the function of host natural killer cells. Counteracts the antiviral effect of host BST2/tetherin that restricts release of progeny virions from infected cells. However, cooperates with VP40 and host BST2 to activate canonical NF-kappa-B pathway in a manner dependent on neddylation. In terms of biological role, functions as a decoy for anti-GP1,2 antibodies thereby contributing to viral immune evasion. Interacts and activates host macrophages and dendritic cells inducing up-regulation of cytokine transcription. This effect is mediated throught activation of host TLR4. Functionally, responsible for binding to the receptor(s) on target cells. Interacts with CD209/DC-SIGN and CLEC4M/DC-SIGNR which act as cofactors for virus entry into dendritic cells (DCs) and endothelial cells. Binding to the macrophage specific lectin CLEC10A also seems to enhance virus infectivity. Interaction with FOLR1/folate receptor alpha may be a cofactor for virus entry in some cell types, although results are contradictory. Members of the Tyro3 receptor tyrosine kinase family also seem to be cell entry factors in filovirus infection. Once attached, the virions are internalized through clathrin-dependent endocytosis and/or macropinocytosis. After internalization of the virus into the endosomes of the host cell, proteolysis of GP1 by two cysteine proteases, CTSB/cathepsin B and CTSL/cathepsin L removes the glycan cap and allows GP1 binding to the host entry receptor NPC1. NPC1-binding, Ca(2+) and acidic pH induce a conformational change of GP2, which unmasks its fusion peptide and permit membranes fusion. Acts as a class I viral fusion protein. Under the current model, the protein has at least 3 conformational states: pre-fusion native state, pre-hairpin intermediate state, and post-fusion hairpin state. During viral and target cell membrane fusion, the coiled coil regions (heptad repeats) assume a trimer-of-hairpins structure, positioning the fusion peptide in close proximity to the C-terminal region of the ectodomain. The formation of this structure appears to drive apposition and subsequent fusion of viral and target cell membranes. Responsible for penetration of the virus into the cell cytoplasm by mediating the fusion of the membrane of the endocytosed virus particle with the endosomal membrane. Low pH in endosomes induces an irreversible conformational change in GP2, releasing the fusion hydrophobic peptide. The chain is Envelope glycoprotein (GP) from Zaire ebolavirus (strain Kikwit-95) (ZEBOV).